A 196-amino-acid chain; its full sequence is Phosphate-specific transport system accessory protein PhoU homolog (196 aa).

It belongs to the PhoU family. In terms of assembly, homodimer.

The protein resides in the cytoplasm. Its function is as follows. Plays a role in the regulation of phosphate uptake. This Archaeoglobus fulgidus (strain ATCC 49558 / DSM 4304 / JCM 9628 / NBRC 100126 / VC-16) protein is Phosphate-specific transport system accessory protein PhoU homolog.